We begin with the raw amino-acid sequence, 185 residues long: ATP-dependent protease subunit HslV (185 aa).

T12 is an active-site residue. 3 residues coordinate Na(+): A168, C171, and T174.

This sequence belongs to the peptidase T1B family. HslV subfamily. In terms of assembly, a double ring-shaped homohexamer of HslV is capped on each side by a ring-shaped HslU homohexamer. The assembly of the HslU/HslV complex is dependent on binding of ATP.

It localises to the cytoplasm. The enzyme catalyses ATP-dependent cleavage of peptide bonds with broad specificity.. With respect to regulation, allosterically activated by HslU binding. Protease subunit of a proteasome-like degradation complex believed to be a general protein degrading machinery. The chain is ATP-dependent protease subunit HslV from Cereibacter sphaeroides (strain ATCC 17023 / DSM 158 / JCM 6121 / CCUG 31486 / LMG 2827 / NBRC 12203 / NCIMB 8253 / ATH 2.4.1.) (Rhodobacter sphaeroides).